The following is a 229-amino-acid chain: UPF0228 protein MA_3119 (229 aa).

The span at 35–66 shows a compositional bias: low complexity; it reads STPVNTSTPVNTSTPVNTSTPVNTSTPVSTST. The segment at 35–67 is disordered; sequence STPVNTSTPVNTSTPVNTSTPVNTSTPVSTSTI.

This sequence belongs to the UPF0228 family.

The polypeptide is UPF0228 protein MA_3119 (Methanosarcina acetivorans (strain ATCC 35395 / DSM 2834 / JCM 12185 / C2A)).